The primary structure comprises 300 residues: m7GpppN-mRNA hydrolase NUDT17 (300 aa).

Residues 88–239 (SRGVDVGVAV…KECVQIPADL (152 aa)) enclose the Nudix hydrolase domain. Residues 127 to 148 (GHVELDEKLLDAGLRELLEETG) carry the Nudix box motif. Residues glutamate 142 and glutamate 146 each contribute to the Mg(2+) site.

This sequence belongs to the Nudix hydrolase family. The cofactor is Mg(2+). Mn(2+) serves as cofactor.

It catalyses the reaction a 5'-end (N(7)-methyl 5'-triphosphoguanosine)-ribonucleoside in mRNA + H2O = N(7)-methyl-GDP + a 5'-end phospho-ribonucleoside in mRNA + 2 H(+). Acts as a decapping enzyme capable of hydrolyzing monomethylated capped RNAs (in vitro). Hydrolyzes monomethylated capped RNA after alpha and beta phosphates to form N(7)-methyl-GDP. Shows low activity towards unmethylated capped RNA. The sequence is that of m7GpppN-mRNA hydrolase NUDT17 (nudt17) from Danio rerio (Zebrafish).